A 298-amino-acid polypeptide reads, in one-letter code: MHNHNKIANKELVVNWHITEACNYRCGYCFAKWGKQKGELIQDVASISQLMDAISGLPAVLNQMHAANFEGVRLNLVGGETFLNYRKIKEVVKQAKKRGLKLSAITNGSRINNDFINLIANNFASIGFSVDSVDNSTNLNIGRVEKNAVMNPEKIIHTIASIRAINPKIEIKVNTVVSDLNKSEDLSDFIGQVMPNKWKIFKVLPVVANHHLISEEQFTRFLRRHQRFGEIIYAEDNTEMVDSYIMIDPIGRFFQNSDFNNGYYYSRPILQVGIHQAFNEINFNANKFYSRYKRASLN.

Residues 8–235 (ANKELVVNWH…QRFGEIIYAE (228 aa)) form the Radical SAM core domain. C22, C26, and C29 together coordinate [4Fe-4S] cluster.

This sequence belongs to the radical SAM superfamily. Viperin family. It depends on [4Fe-4S] cluster as a cofactor.

It carries out the reaction CTP + AH2 + S-adenosyl-L-methionine = 3'-deoxy-3',4'-didehydro-CTP + 5'-deoxyadenosine + L-methionine + A + H2O + H(+). The catalysed reaction is UTP + AH2 + S-adenosyl-L-methionine = 3'-deoxy-3',4'-didehydro-UTP + 5'-deoxyadenosine + L-methionine + A + H2O + H(+). Expression of pVip8 in E.coli (strain MG1655) confers resistance to phages lambda, P1, SECphi8 and T7. Prevents culture collapse upon infection with T7. Catalyzes the conversion of cytidine triphosphate (CTP) to 3'-deoxy-3',4'-didehydro-CTP (ddhCTP) and uridine triphosphate (UTP) to 3'-deoxy-3',4'-didehydro-UTP (ddhUTP), probably via a SAM-dependent radical mechanism. The modified nucleotides repress transcription from T7 RNA polymerase-directed genes (possibly by acting as chain terminators), strongly suggesting these nucleotides block viral polymerase transcription. The polypeptide is S-adenosylmethionine-dependent nucleotide dehydratase (Psychrobacter lutiphocae (strain DSM 21542 / CCUG 56590 / IMMIB L-1110)).